We begin with the raw amino-acid sequence, 255 residues long: Cullin-like protein 3 (255 aa).

It belongs to the cullin family.

The protein is Cullin-like protein 3 of Arabidopsis thaliana (Mouse-ear cress).